Consider the following 76-residue polypeptide: EMBRYO SURROUNDING FACTOR 1-like protein 8 (76 aa).

The signal sequence occupies residues 1–22 (MSSSQFFILCIILISSFPLHEC). Disulfide bonds link Cys38–Cys54, Cys43–Cys74, Cys52–Cys70, and Cys55–Cys63.

Belongs to the MEG family. As to expression, expressed in flowers.

The chain is EMBRYO SURROUNDING FACTOR 1-like protein 8 (ESFL8) from Arabidopsis thaliana (Mouse-ear cress).